Consider the following 157-residue polypeptide: MVSGLINENPIIYPKKERRLRTDTSITDELTPEPIDQLEIFDHIRDIKDPEHPNTLEDLRVVTEDSVEVDDENSYVRVTFTPTVEHCSMATVIGLCVRVKLLRSLPSRYKIDIRVAPGSHATEDALNKQLNDKERVAAALENPNLVEMVDECLPSEE.

It belongs to the MIP18 family. Part of a complex formed of AE7, CIA1, MMS19 and NAR1. Interacts with CIA1 and MMS19, but not with NAR1. In terms of tissue distribution, expressed in the embryo, shoot apical meristem, leaf primordia, inflorescence and all floral organs.

The protein localises to the nucleus. It is found in the cytoplasm. Central member of the cytosolic iron-sulfur (Fe-S) protein assembly (CIA) pathway. Involved in leaf polarity formation. Promotes leaf adaxial identity. May play a role in the cell cycle progression and is required for cell proliferation. The chain is Protein AE7 from Arabidopsis thaliana (Mouse-ear cress).